A 254-amino-acid polypeptide reads, in one-letter code: Polysaccharide deacetylase domain-containing protein ECU11_0510 (254 aa).

Residues 26 to 210 (GMIAINFVDG…IGKDKGYRFV (185 aa)) enclose the NodB homology domain.

The polypeptide is Polysaccharide deacetylase domain-containing protein ECU11_0510 (Encephalitozoon cuniculi (strain GB-M1) (Microsporidian parasite)).